The sequence spans 570 residues: Proline--tRNA ligase (570 aa).

This sequence belongs to the class-II aminoacyl-tRNA synthetase family. ProS type 1 subfamily. Homodimer.

The protein localises to the cytoplasm. It catalyses the reaction tRNA(Pro) + L-proline + ATP = L-prolyl-tRNA(Pro) + AMP + diphosphate. Functionally, catalyzes the attachment of proline to tRNA(Pro) in a two-step reaction: proline is first activated by ATP to form Pro-AMP and then transferred to the acceptor end of tRNA(Pro). As ProRS can inadvertently accommodate and process non-cognate amino acids such as alanine and cysteine, to avoid such errors it has two additional distinct editing activities against alanine. One activity is designated as 'pretransfer' editing and involves the tRNA(Pro)-independent hydrolysis of activated Ala-AMP. The other activity is designated 'posttransfer' editing and involves deacylation of mischarged Ala-tRNA(Pro). The misacylated Cys-tRNA(Pro) is not edited by ProRS. The protein is Proline--tRNA ligase of Wolinella succinogenes (strain ATCC 29543 / DSM 1740 / CCUG 13145 / JCM 31913 / LMG 7466 / NCTC 11488 / FDC 602W) (Vibrio succinogenes).